We begin with the raw amino-acid sequence, 513 residues long: rRNA N(6)-adenosine-methyltransferase ZCCHC4 (513 aa).

Residues Cys40, His42, Cys64, Cys73, Cys125, Cys128, His140, and His143 each coordinate Zn(2+). The GRF-type zinc-finger motif lies at 40-82 (CPHGPTLLFVKVTQGKEETRRFYACSACRDRKDCNFFQWEDEK). Residues 172–175 (QYLF), Arg202, Asp225, 243–244 (NM), and Asp276 contribute to the S-adenosyl-L-methionine site. Positions 337–357 (QVDYDNHALYKHGKTGRKQSP) are regulatory loop. Zn(2+)-binding residues include Cys380, Cys383, His393, Cys394, Cys397, Cys400, His410, Cys411, Cys414, Cys417, His424, Cys425, Cys428, Cys431, His436, and Cys438. The DHHC domain maps to 395-447 (ELCNSCTSKDGRKWNHCFLCKKCVKPSWIHCSICNHCAVPDHSCEGPKHGCFI). A CCHC-type zinc finger spans residues 443–460 (HGCFICGELDHKRSTCPN). The span at 466-481 (RANKAVRKQKQRKSNK) shows a compositional bias: basic residues. The interval 466–513 (RANKAVRKQKQRKSNKMKMETTKGQSMNHTSATRRKKRRERAHQYLGS) is disordered. A compositionally biased stretch (polar residues) spans 487–496 (TKGQSMNHTS). Residues 497–506 (ATRRKKRRER) are compositionally biased toward basic residues.

Belongs to the ZCCHC4 family. In terms of assembly, interacts with components of the ASC-1 complex TRIP4, ASCC1, ASCC2 and ASCC3. Interact with AHCYL1 and AHCYL2. Interact with YTHDC2.

The protein localises to the nucleus. The protein resides in the nucleolus. Its subcellular location is the cytoplasm. It carries out the reaction adenosine(4220) in 28S rRNA + S-adenosyl-L-methionine = N(6)-methyladenosine(4220) in 28S rRNA + S-adenosyl-L-homocysteine + H(+). In terms of biological role, rRNA N6-methyltransferase that specifically methylates the adenine in position 4220 of 28S rRNA. N6-methylation of adenine(4220) in 28S rRNA is required for translation. The protein is rRNA N(6)-adenosine-methyltransferase ZCCHC4 of Homo sapiens (Human).